The primary structure comprises 226 residues: MLLRLVSNSWPQVILPPRPPKVLGLQAPRRARKRAEGTASSNVFSMFDQSQIQEFKESLALSPRLERNGMISAHCNLCLTGSSNSPASASQAFTIMDQNRDGFIDKEDLRDTFAALGRINVKNEELEAMVKEAPGPINFTVFLTMFGEKLKGTDPEETILHAFKVFDTEGKGFVKADVIKEKLMTQADRFSEEEVKQMFAAFPPDVCGNLDYRNLCYVITHGEEKD.

3 EF-hand domains span residues 84 to 119, 154 to 189, and 190 to 225; these read NSPA…LGRI, DPEE…QADR, and FSEE…GEEK. The Ca(2+) site is built by D97, N99, D101, and D108.

In terms of assembly, myosin is a hexamer of 2 heavy chains and 4 light chains.

The protein is Myosin regulatory light chain 10 (MYL10) of Homo sapiens (Human).